A 52-amino-acid polypeptide reads, in one-letter code: Large ribosomal subunit protein bL33 (52 aa).

It belongs to the bacterial ribosomal protein bL33 family.

The polypeptide is Large ribosomal subunit protein bL33 (Anaeromyxobacter dehalogenans (strain 2CP-C)).